A 293-amino-acid chain; its full sequence is uncharacterized protein (293 aa).

The active site involves Asp-119.

Belongs to the pseudouridine synthase RluA family.

The enzyme catalyses a uridine in RNA = a pseudouridine in RNA. This is an uncharacterized protein from Helicobacter pylori (strain J99 / ATCC 700824) (Campylobacter pylori J99).